Reading from the N-terminus, the 166-residue chain is Mitochondrial inner membrane protease subunit 1 (166 aa).

Catalysis depends on residues serine 40 and lysine 83.

The protein belongs to the peptidase S26 family. IMP1 subfamily. As to quaternary structure, heterodimer of 2 subunits, IMMPL1 and IMMPL2.

The protein localises to the mitochondrion inner membrane. Catalyzes the removal of transit peptides required for the targeting of proteins from the mitochondrial matrix, across the inner membrane, into the inter-membrane space. Known to process the nuclear encoded protein DIABLO. The polypeptide is Mitochondrial inner membrane protease subunit 1 (Immp1l) (Mus musculus (Mouse)).